A 179-amino-acid polypeptide reads, in one-letter code: Probable protein archease (179 aa).

Positions 55, 178, and 179 each coordinate Ca(2+).

This sequence belongs to the archease family.

In terms of biological role, activates the tRNA-splicing ligase complex by facilitating the enzymatic turnover of catalytic subunit RtcB. Acts by promoting the guanylylation of RtcB, a key intermediate step in tRNA ligation. Can also alter the NTP specificity of RtcB such that ATP, dGTP or ITP is used efficiently. The protein is Probable protein archease of Mycobacterium tuberculosis (strain CDC 1551 / Oshkosh).